The following is a 397-amino-acid chain: MAKEKFDRSLPHVNVGTIGHVDHGKTTLTAALTRVCSEVFGSAVVEFDKIDSAPEEKARGITINTAHVEYNSNIRHYAHVDCPGHADYVKNMITGAAQMDGAILVCSAADGPMPQTREHILLSRQVGVPYIVVFLNKADLVDDAELLELVEMEVRDLLSTYDFPGDDTPIIIGSARMALEGKDDNEMGTTAVKKLVETLDSYIPEPERAIDKPFLMPIEDVFSISGRGTVVTGRIERGIVRVQDALEIVGLRDTTTTTCTGVEMFRKLLDEGRAGENCGVLLRGTKRDDVERGQVLVKPGSVKPHTKFTAEVYVLSKEEGGRHTPFFKGYRPQFYFRTTDVTGNCELPEGVEMVMPGDNIQMTVTLIKTIAMEDGLRFAIREGGRTVGAGVVAKIIE.

Positions Leu-10 to Glu-207 constitute a tr-type G domain. The interval Gly-19–Thr-26 is G1. Gly-19–Thr-26 contacts GTP. Residue Thr-26 participates in Mg(2+) binding. The interval Gly-60–Asn-64 is G2. A G3 region spans residues Asp-81–Gly-84. GTP-binding positions include Asp-81–His-85 and Asn-136–Asp-139. A G4 region spans residues Asn-136–Asp-139. A G5 region spans residues Ser-174–Arg-176.

This sequence belongs to the TRAFAC class translation factor GTPase superfamily. Classic translation factor GTPase family. EF-Tu/EF-1A subfamily. As to quaternary structure, monomer.

Its subcellular location is the cytoplasm. It catalyses the reaction GTP + H2O = GDP + phosphate + H(+). Functionally, GTP hydrolase that promotes the GTP-dependent binding of aminoacyl-tRNA to the A-site of ribosomes during protein biosynthesis. This chain is Elongation factor Tu, found in Pseudomonas fluorescens (strain Pf0-1).